A 595-amino-acid polypeptide reads, in one-letter code: Elongation factor 4 (595 aa).

Residues 2–184 enclose the tr-type G domain; the sequence is KNIRNFSIIA…QIVEKIPAPK (183 aa). Residues 14–19 and 131–134 contribute to the GTP site; these read DHGKST and NKID.

This sequence belongs to the TRAFAC class translation factor GTPase superfamily. Classic translation factor GTPase family. LepA subfamily.

It localises to the cell inner membrane. It carries out the reaction GTP + H2O = GDP + phosphate + H(+). Functionally, required for accurate and efficient protein synthesis under certain stress conditions. May act as a fidelity factor of the translation reaction, by catalyzing a one-codon backward translocation of tRNAs on improperly translocated ribosomes. Back-translocation proceeds from a post-translocation (POST) complex to a pre-translocation (PRE) complex, thus giving elongation factor G a second chance to translocate the tRNAs correctly. Binds to ribosomes in a GTP-dependent manner. In Ruthia magnifica subsp. Calyptogena magnifica, this protein is Elongation factor 4.